The sequence spans 393 residues: Arrestin-C (393 aa).

Residues 371-386 show a composition bias toward basic and acidic residues; that stretch reads FARQEDGGEEKQKALA. The segment at 371-393 is disordered; that stretch reads FARQEDGGEEKQKALAEEGDEGS.

The protein belongs to the arrestin family. As to quaternary structure, homodimer; disulfide-linked in response to retinal illumination. Interacts with CXCR4; the interaction is dependent on the C-terminal phosphorylation of CXCR4 and modulates the calcium ion mobilization activity of CXCR4.

Its subcellular location is the photoreceptor inner segment. It localises to the cell projection. It is found in the cilium. The protein localises to the photoreceptor outer segment. In terms of biological role, may play a role in an as yet undefined retina-specific signal transduction. Could bind to photoactivated-phosphorylated red/green opsins. The chain is Arrestin-C (ARR3) from Ictidomys tridecemlineatus (Thirteen-lined ground squirrel).